The sequence spans 157 residues: Regenerating islet-derived protein 4 (157 aa).

Positions 1–22 (MASKGVRLLLLLSWVAGPEVLS) are cleaved as a signal peptide. C29 and C40 are joined by a disulfide. The region spanning 36–154 (YRSHCYGYFR…CANRQHFLCK (119 aa)) is the C-type lectin domain. N-linked (GlcNAc...) asparagine glycans are attached at residues N49 and N62. 2 cysteine pairs are disulfide-bonded: C57–C153 and C128–C145. A carbohydrate-binding positions include 97–102 (DPQKKQ) and 134–136 (KDK).

It is found in the secreted. Calcium-independent lectin displaying mannose-binding specificity and able to maintain carbohydrate recognition activity in an acidic environment. May be involved in inflammatory and metaplastic responses of the gastrointestinal epithelium. In Mus musculus (Mouse), this protein is Regenerating islet-derived protein 4 (Reg4).